The following is a 337-amino-acid chain: Mitochondrial uncoupling protein 6 (337 aa).

Solcar repeat units follow at residues Lys4–Arg136, Phe145–Ile236, and Gly246–Leu331. The next 6 membrane-spanning stretches (helical) occupy residues Phe6–Ile26, Pro105–Thr125, Ile151–Ala171, Arg210–Tyr230, Val252–Val272, and Tyr304–Thr324.

It belongs to the mitochondrial carrier (TC 2.A.29) family.

The protein localises to the mitochondrion inner membrane. In terms of biological role, PUMPS are mitochondrial transporter proteins that create proton leaks across the inner mitochondrial membrane, thus uncoupling oxidative phosphorylation. This leads to a decrease in the efficiency of oxidative phosphorylation and an increase in heat production. May be involved in protecting plant cells against oxidative stress damage. Recombinant PUMP6, reconstituted into liposomes, transports a wide range of dicarboxylic acids including malate, oxaloacetate and succinate as well as phosphate, sulfate and thiosulfate. However, it is unknown if these transports are of any biological significance in vivo. The protein is Mitochondrial uncoupling protein 6 (PUMP6) of Arabidopsis thaliana (Mouse-ear cress).